Here is a 246-residue protein sequence, read N- to C-terminus: 3'(2'),5'-bisphosphate nucleotidase CysQ (246 aa).

Residues Glu-64, Asp-83, Leu-85, Asp-86, and Asp-205 each contribute to the Mg(2+) site. Glu-64 serves as a coordination point for substrate. Residues 85 to 88 (LDGT) and Asp-205 contribute to the substrate site.

This sequence belongs to the inositol monophosphatase superfamily. CysQ family. It depends on Mg(2+) as a cofactor.

Its subcellular location is the cell inner membrane. It carries out the reaction adenosine 3',5'-bisphosphate + H2O = AMP + phosphate. Converts adenosine-3',5'-bisphosphate (PAP) to AMP. The chain is 3'(2'),5'-bisphosphate nucleotidase CysQ from Salmonella typhimurium (strain LT2 / SGSC1412 / ATCC 700720).